The primary structure comprises 605 residues: DNA primase (605 aa).

Residues 38–62 (CPFHDEKTPSFTVSEDKQICHCFGC) form a CHC2-type zinc finger. The 82-residue stretch at 260-341 (DEIVLLEGFM…NVFVIQLPSG (82 aa)) folds into the Toprim domain. Residues Glu266, Asp310, and Asp312 each contribute to the Mg(2+) site.

Belongs to the DnaG primase family. In terms of assembly, monomer. Interacts with DnaB. Zn(2+) serves as cofactor. It depends on Mg(2+) as a cofactor.

The catalysed reaction is ssDNA + n NTP = ssDNA/pppN(pN)n-1 hybrid + (n-1) diphosphate.. Its function is as follows. RNA polymerase that catalyzes the synthesis of short RNA molecules used as primers for DNA polymerase during DNA replication. The sequence is that of DNA primase from Staphylococcus aureus (strain Mu50 / ATCC 700699).